Reading from the N-terminus, the 1286-residue chain is DNA-directed RNA polymerase 147 kDa polypeptide (1286 aa).

Belongs to the poxviridae DNA-directed RNA polymerase 147 kDa subunit family. The DNA-dependent RNA polymerase used for intermediate and late genes expression consists of eight subunits Rpo30/OPG66, Rpo7/OPG90, Rpo22/OPG103, Rpo147/OPG105, Rpo18/OPG119, Rpo19/OPG131, Rpo132/OPG151 and Rpo35/OPG156. The same holoenzyme, with the addition of the transcription-specificity factor OPG109, is used for early gene expression.

The protein localises to the virion. The enzyme catalyses RNA(n) + a ribonucleoside 5'-triphosphate = RNA(n+1) + diphosphate. Its function is as follows. Part of the DNA-dependent RNA polymerase which catalyzes the transcription of viral DNA into RNA using the four ribonucleoside triphosphates as substrates. Responsible for the transcription of early, intermediate and late genes. DNA-dependent RNA polymerase associates with the early transcription factor (ETF), itself composed of OPG118 and OPG133, thereby allowing the early genes transcription. Late transcription, and probably also intermediate transcription, require newly synthesized RNA polymerase. In Variola virus (isolate Human/India/Ind3/1967) (VARV), this protein is DNA-directed RNA polymerase 147 kDa polypeptide (OPG105).